The sequence spans 154 residues: Neurotrophin-3 (154 aa).

The N-terminal stretch at 1 to 18 is a signal peptide; the sequence is MSILFYVMFLAYLRGVQG. The propeptide occupies 19-134; that stretch reads NSMDQRSLPE…VNSRSPRRKR (116 aa).

It belongs to the NGF-beta family.

The protein localises to the secreted. Seems to promote the survival of visceral and proprioceptive sensory neurons. This chain is Neurotrophin-3 (NTF3), found in Cervus elaphus (Red deer).